The following is a 452-amino-acid chain: Bifunctional protein GlmU (452 aa).

The interval 1–226 (MSLDIVILAA…AMEVQGANDR (226 aa)) is pyrophosphorylase. UDP-N-acetyl-alpha-D-glucosamine-binding positions include 8–11 (LAAG), lysine 22, glutamine 73, 78–79 (GT), 99–101 (YGD), glycine 136, glutamate 151, asparagine 166, and asparagine 224. Aspartate 101 is a binding site for Mg(2+). Asparagine 224 lines the Mg(2+) pocket. The linker stretch occupies residues 227–247 (IQLAELERHYQLRAARRLMAQ). The interval 248-452 (GVTLRDPARF…IDGWQRPTKK (205 aa)) is N-acetyltransferase. Positions 330 and 348 each coordinate UDP-N-acetyl-alpha-D-glucosamine. The active-site Proton acceptor is histidine 360. 2 residues coordinate UDP-N-acetyl-alpha-D-glucosamine: tyrosine 363 and asparagine 374. Residues alanine 377, 383 to 384 (NY), serine 402, alanine 420, and arginine 437 contribute to the acetyl-CoA site.

The protein in the N-terminal section; belongs to the N-acetylglucosamine-1-phosphate uridyltransferase family. In the C-terminal section; belongs to the transferase hexapeptide repeat family. Homotrimer. The cofactor is Mg(2+).

It localises to the cytoplasm. It carries out the reaction alpha-D-glucosamine 1-phosphate + acetyl-CoA = N-acetyl-alpha-D-glucosamine 1-phosphate + CoA + H(+). It catalyses the reaction N-acetyl-alpha-D-glucosamine 1-phosphate + UTP + H(+) = UDP-N-acetyl-alpha-D-glucosamine + diphosphate. It participates in nucleotide-sugar biosynthesis; UDP-N-acetyl-alpha-D-glucosamine biosynthesis; N-acetyl-alpha-D-glucosamine 1-phosphate from alpha-D-glucosamine 6-phosphate (route II): step 2/2. The protein operates within nucleotide-sugar biosynthesis; UDP-N-acetyl-alpha-D-glucosamine biosynthesis; UDP-N-acetyl-alpha-D-glucosamine from N-acetyl-alpha-D-glucosamine 1-phosphate: step 1/1. Its pathway is bacterial outer membrane biogenesis; LPS lipid A biosynthesis. Its function is as follows. Catalyzes the last two sequential reactions in the de novo biosynthetic pathway for UDP-N-acetylglucosamine (UDP-GlcNAc). The C-terminal domain catalyzes the transfer of acetyl group from acetyl coenzyme A to glucosamine-1-phosphate (GlcN-1-P) to produce N-acetylglucosamine-1-phosphate (GlcNAc-1-P), which is converted into UDP-GlcNAc by the transfer of uridine 5-monophosphate (from uridine 5-triphosphate), a reaction catalyzed by the N-terminal domain. This chain is Bifunctional protein GlmU, found in Stutzerimonas stutzeri (strain A1501) (Pseudomonas stutzeri).